The chain runs to 832 residues: Translation initiation factor IF-2 (832 aa).

The tract at residues Met-1 to Lys-249 is disordered. Pro residues predominate over residues Thr-53 to Ala-71. The segment covering Pro-89–Ala-144 has biased composition (basic and acidic residues). Positions Ala-145–Ala-156 are enriched in low complexity. Positions Pro-180–Lys-200 are enriched in basic and acidic residues. One can recognise a tr-type G domain in the interval Pro-333–Lys-503. The tract at residues Gly-342–Thr-349 is G1. Gly-342–Thr-349 is a GTP binding site. The tract at residues Gly-367 to His-371 is G2. The segment at Asp-389 to Gly-392 is G3. GTP is bound by residues Asp-389 to His-393 and Asn-443 to Asp-446. The tract at residues Asn-443–Asp-446 is G4. The tract at residues Ser-479–Thr-481 is G5.

It belongs to the TRAFAC class translation factor GTPase superfamily. Classic translation factor GTPase family. IF-2 subfamily.

It localises to the cytoplasm. Its function is as follows. One of the essential components for the initiation of protein synthesis. Protects formylmethionyl-tRNA from spontaneous hydrolysis and promotes its binding to the 30S ribosomal subunits. Also involved in the hydrolysis of GTP during the formation of the 70S ribosomal complex. The chain is Translation initiation factor IF-2 from Erythrobacter litoralis (strain HTCC2594).